The sequence spans 176 residues: Large ribosomal subunit protein uL22 (176 aa).

Residues 113 to 176 (VVESRPSKDQ…EISEAKGGSD (64 aa)) form a disordered region. Over residues 136-152 (SKAAATAPAKKSSASKA) the composition is skewed to low complexity. Basic and acidic residues predominate over residues 159 to 176 (TKAESKTSEISEAKGGSD).

It belongs to the universal ribosomal protein uL22 family. In terms of assembly, part of the 50S ribosomal subunit.

Functionally, this protein binds specifically to 23S rRNA; its binding is stimulated by other ribosomal proteins, e.g. L4, L17, and L20. It is important during the early stages of 50S assembly. It makes multiple contacts with different domains of the 23S rRNA in the assembled 50S subunit and ribosome. The globular domain of the protein is located near the polypeptide exit tunnel on the outside of the subunit, while an extended beta-hairpin is found that lines the wall of the exit tunnel in the center of the 70S ribosome. This is Large ribosomal subunit protein uL22 from Mycobacterium ulcerans (strain Agy99).